The following is a 298-amino-acid chain: Glutamyl-Q tRNA(Asp) synthetase (298 aa).

Residues 8-12 (RFAPS) and E44 each bind L-glutamate. Residues 11-21 (PSPTGPLHFGS) carry the 'HIGH' region motif. Residues C100, C102, Y123, and C127 each coordinate Zn(2+). Residues Y183 and R201 each contribute to the L-glutamate site. The 'KMSKS' region signature appears at 239-243 (KLSKQ). Residue K242 participates in ATP binding.

The protein belongs to the class-I aminoacyl-tRNA synthetase family. GluQ subfamily. It depends on Zn(2+) as a cofactor.

Catalyzes the tRNA-independent activation of glutamate in presence of ATP and the subsequent transfer of glutamate onto a tRNA(Asp). Glutamate is transferred on the 2-amino-5-(4,5-dihydroxy-2-cyclopenten-1-yl) moiety of the queuosine in the wobble position of the QUC anticodon. The polypeptide is Glutamyl-Q tRNA(Asp) synthetase (Burkholderia orbicola (strain AU 1054)).